Reading from the N-terminus, the 118-residue chain is Ribonuclease P protein component (118 aa).

This sequence belongs to the RnpA family. As to quaternary structure, consists of a catalytic RNA component (M1 or rnpB) and a protein subunit.

It carries out the reaction Endonucleolytic cleavage of RNA, removing 5'-extranucleotides from tRNA precursor.. Functionally, RNaseP catalyzes the removal of the 5'-leader sequence from pre-tRNA to produce the mature 5'-terminus. It can also cleave other RNA substrates such as 4.5S RNA. The protein component plays an auxiliary but essential role in vivo by binding to the 5'-leader sequence and broadening the substrate specificity of the ribozyme. This chain is Ribonuclease P protein component, found in Shewanella oneidensis (strain ATCC 700550 / JCM 31522 / CIP 106686 / LMG 19005 / NCIMB 14063 / MR-1).